The primary structure comprises 999 residues: Sarcoplasmic/endoplasmic reticulum calcium ATPase 3 (999 aa).

Residue methionine 1 is modified to N-acetylmethionine. The Cytoplasmic segment spans residues 1–48 (MEEAHLLSAADVLRRFSVTAEGGLSLEQVTDARERYGPNELPTEEGKS). Serine 17 is modified (phosphoserine). Residue threonine 19 is modified to Phosphothreonine. Serine 25 carries the post-translational modification Phosphoserine. The helical transmembrane segment at 49 to 69 (LWELVVEQFEDLLVRILLLAA) threads the bilayer. Topologically, residues 70–89 (LVSFVLAWFEEGEETTTAFV) are lumenal. Residues 90–110 (EPLVIMLILVANAIVGVWQER) form a helical membrane-spanning segment. Topologically, residues 111-253 (NAESAIEALK…PERTPLQRKL (143 aa)) are cytoplasmic. A helical transmembrane segment spans residues 254–273 (DEFGRQLSHAISVICVAVWV). Residues 274 to 295 (INIGHFADPAHGGSWLRGAVYY) are Lumenal-facing. The helical transmembrane segment at 296 to 313 (FKIAVALAVAAIPEGLPA) threads the bilayer. The Ca(2+) site is built by valine 304, alanine 305, isoleucine 307, and glutamate 309. Residues 314 to 757 (VITTCLALGT…EEGRAIYNNM (444 aa)) are Cytoplasmic-facing. Aspartate 351 functions as the 4-aspartylphosphate intermediate in the catalytic mechanism. Aspartate 351 and threonine 353 together coordinate Mg(2+). Threonine 353 is a binding site for ATP. Residues 370 to 400 (AEAEAGTCRLHEFTISGTTYTPEGEVRQGEQ) form an interaction with phospholamban 1 region. Position 415 is a phosphothreonine (threonine 415). ATP contacts are provided by glutamate 442, arginine 489, lysine 515, arginine 560, threonine 625, glycine 626, and aspartate 627. Residue serine 662 is modified to Phosphoserine. The ATP site is built by arginine 678 and lysine 684. Aspartate 703 is a Mg(2+) binding site. Asparagine 706 provides a ligand contact to ATP. Residues 758–777 (KQFIRYLISSNVGEVVCIFL) form a helical membrane-spanning segment. Residues asparagine 768 and glutamate 771 each coordinate Ca(2+). At 778-787 (TAILGLPEAL) the chain is on the lumenal side. The chain crosses the membrane as a helical span at residues 788 to 808 (IPVQLLWVNLVTDGLPATALG). Residues 788–808 (IPVQLLWVNLVTDGLPATALG) are interaction with phospholamban 2. Residues asparagine 796, threonine 799, and aspartate 800 each coordinate Ca(2+). Topologically, residues 809 to 828 (FNPPDLDIMEKPPRNPREAL) are cytoplasmic. Residues 829–851 (ISGWLFFRYLAIGVYVGLATVAA) form a helical membrane-spanning segment. The Lumenal portion of the chain corresponds to 852-897 (ATWWFLYDTEGPQVTFYQLRNFLKCSEDNPLFAGIDCKVFESRFPT). A helical membrane pass occupies residues 898–917 (TMALSVLVTIEMCNALNSVS). Residue glutamate 908 coordinates Ca(2+). Residues 918–930 (ENQSLLRMPPWLN) lie on the Cytoplasmic side of the membrane. The chain crosses the membrane as a helical span at residues 931-949 (PWLLGAVVMSMALHFLILL). Residues 950-964 (VPPLPLIFQVTPLSG) lie on the Lumenal side of the membrane. The chain crosses the membrane as a helical span at residues 965 to 985 (RQWGVVLQMSLPVILLDEALK). Residues 986 to 999 (YLSRNHMDEKKDLK) are Cytoplasmic-facing.

Belongs to the cation transport ATPase (P-type) (TC 3.A.3) family. Type IIA subfamily. In terms of assembly, interacts with sarcolipin (SLN). Interacts with phospholamban (PLN). Interacts with myoregulin (MRLN). Interacts with DWORF. Interacts with VMP1. Interacts with TUNAR; the interaction occurs at low levels in low glucose conditions and is increased by high glucose levels. The cofactor is Mg(2+).

The protein localises to the endoplasmic reticulum membrane. It localises to the sarcoplasmic reticulum membrane. The enzyme catalyses Ca(2+)(in) + ATP + H2O = Ca(2+)(out) + ADP + phosphate + H(+). Inhibited by sarcolipin (SLN), phospholamban (PLN) and myoregulin (MRLN). Enhanced by DWORF; DWORF increases activity by displacing sarcolipin (SLN), phospholamban (PLN) and myoregulin (MRLN). This magnesium-dependent enzyme catalyzes the hydrolysis of ATP coupled with the transport of calcium. Transports calcium ions from the cytosol into the sarcoplasmic/endoplasmic reticulum lumen. Contributes to calcium sequestration involved in muscular excitation/contraction. This Mus musculus (Mouse) protein is Sarcoplasmic/endoplasmic reticulum calcium ATPase 3 (Atp2a3).